Here is a 762-residue protein sequence, read N- to C-terminus: Catalase-peroxidase (762 aa).

The tract at residues 1-22 (MAEAKCPFSQSRSNANVAGGGT) is disordered. Positions 96–242 (WHSAGTYRVF…LAASHMGLIY (147 aa)) form a cross-link, tryptophyl-tyrosyl-methioninium (Trp-Tyr) (with M-268). His97 (proton acceptor) is an active-site residue. The tryptophyl-tyrosyl-methioninium (Tyr-Met) (with W-96) cross-link spans 242-268 (YVNPEGPDGNPDPVAAARDIRTTFGRM). Residue His283 participates in heme b binding.

The protein belongs to the peroxidase family. Peroxidase/catalase subfamily. As to quaternary structure, homodimer or homotetramer. Heme b is required as a cofactor. In terms of processing, formation of the three residue Trp-Tyr-Met cross-link is important for the catalase, but not the peroxidase activity of the enzyme.

It localises to the cytoplasm. It catalyses the reaction H2O2 + AH2 = A + 2 H2O. It carries out the reaction 2 H2O2 = O2 + 2 H2O. In terms of biological role, bifunctional enzyme with both catalase and broad-spectrum peroxidase activity. The polypeptide is Catalase-peroxidase (Aspergillus niger (strain ATCC MYA-4892 / CBS 513.88 / FGSC A1513)).